Reading from the N-terminus, the 468-residue chain is Chromosomal replication initiator protein DnaA (468 aa).

The tract at residues 1–90 (MTQEKWGLLC…NSPMRPARAA (90 aa)) is domain I, interacts with DnaA modulators. The domain II stretch occupies residues 91–126 (RPAAAAAAAAAAVEAPQVSAPRATDTSDVLDGLQAA). A domain III, AAA+ region region spans residues 127 to 348 (PLDPRFTFDS…GALTRLFAFA (222 aa)). ATP contacts are provided by G171, G173, K174, and T175. The segment at 349–468 (SLVGREIDME…VEMLRRALEA (120 aa)) is domain IV, binds dsDNA.

This sequence belongs to the DnaA family. As to quaternary structure, oligomerizes as a right-handed, spiral filament on DNA at oriC.

The protein localises to the cytoplasm. In terms of biological role, plays an essential role in the initiation and regulation of chromosomal replication. ATP-DnaA binds to the origin of replication (oriC) to initiate formation of the DNA replication initiation complex once per cell cycle. Binds the DnaA box (a 9 base pair repeat at the origin) and separates the double-stranded (ds)DNA. Forms a right-handed helical filament on oriC DNA; dsDNA binds to the exterior of the filament while single-stranded (ss)DNA is stabiized in the filament's interior. The ATP-DnaA-oriC complex binds and stabilizes one strand of the AT-rich DNA unwinding element (DUE), permitting loading of DNA polymerase. After initiation quickly degrades to an ADP-DnaA complex that is not apt for DNA replication. Binds acidic phospholipids. The protein is Chromosomal replication initiator protein DnaA of Ruegeria pomeroyi (strain ATCC 700808 / DSM 15171 / DSS-3) (Silicibacter pomeroyi).